The chain runs to 919 residues: PAX3- and PAX7-binding protein 1 (919 aa).

Positions 1-11 (MFRKARRVNVR) are enriched in basic residues. 3 disordered regions span residues 1-120 (MFRK…ENEE), 151-206 (KTEL…GGAF), and 237-277 (AREL…RIVF). Ser-16 carries the post-translational modification Phosphoserine. A compositionally biased stretch (acidic residues) spans 16-28 (SEEEERERDEEQE). Low complexity predominate over residues 49 to 59 (RAPAGESLLGP). Residues 75–87 (AEAGGGISGGAEP) show a composition bias toward gly residues. A Glycyl lysine isopeptide (Lys-Gly) (interchain with G-Cter in SUMO1); alternate cross-link involves residue Lys-151. A Glycyl lysine isopeptide (Lys-Gly) (interchain with G-Cter in SUMO2); alternate cross-link involves residue Lys-151. Position 160 is a phosphoserine (Ser-160). The span at 163 to 174 (PLDKTCHAKDTN) shows a compositional bias: basic and acidic residues. The segment covering 185–195 (GEDEMDMESEK) has biased composition (acidic residues). At Ser-193 the chain carries Phosphoserine. The span at 237–258 (ARELGDFTPHDSEPGKGRLVRE) shows a compositional bias: basic and acidic residues. Acidic residues predominate over residues 259-270 (DENDASDDEDDD). Phosphoserine occurs at positions 264, 297, 559, and 560. Positions 380–560 (TPSNEMAPVT…MADHLEGLSS (181 aa)) are necessary and sufficient for interaction with PAX7. The segment at 533-566 (EREARRTRRRQAREQTGQMADHLEGLSSDDEETS) is disordered. Thr-565 is subject to Phosphothreonine.

The protein belongs to the GCF family. As to quaternary structure, interacts with PAX3 and PAX7. Interacts with WDR5; associates with a histone methyltransferase (HMT) complex composed at least of RBBP5, ASH2L, SET1, SET2 and KMT2A/MLL1, KMT2D/MLL2, KMT2C/MLL3 and KMT2B/MLL4 through direct interaction with WDR5. Ubiquitously expressed in all tissues tested including skeletal muscle. Expressed in primary myoblasts.

Its subcellular location is the nucleus. Its function is as follows. Adapter protein linking the transcription factors PAX3 and PAX7 to the histone methylation machinery and involved in myogenesis. Associates with a histone methyltransferase complex that specifically mediates dimethylation and trimethylation of 'Lys-4' of histone H3. Mediates the recruitment of that complex to the transcription factors PAX3 and PAX7 on chromatin to regulate the expression of genes involved in muscle progenitor cells proliferation including ID3 and CDC20. This chain is PAX3- and PAX7-binding protein 1 (Paxbp1), found in Mus musculus (Mouse).